Reading from the N-terminus, the 467-residue chain is Rhamnulokinase (467 aa).

Residue 11–15 (ASSGR) participates in ATP binding. Substrate contacts are provided by residues Ala78 and 235-237 (HDT). The active-site Proton acceptor is Asp236. Thr257 is an ATP binding site. Asn294 lines the substrate pocket. ATP is bound at residue Gln302. An intrachain disulfide couples Cys351 to Cys368. Gly400 provides a ligand contact to ATP.

This sequence belongs to the rhamnulokinase family. The cofactor is Mg(2+).

It catalyses the reaction L-rhamnulose + ATP = L-rhamnulose 1-phosphate + ADP + H(+). Its pathway is carbohydrate degradation; L-rhamnose degradation; glycerone phosphate from L-rhamnose: step 2/3. Its function is as follows. Involved in the catabolism of L-rhamnose (6-deoxy-L-mannose). Catalyzes the transfer of the gamma-phosphate group from ATP to the 1-hydroxyl group of L-rhamnulose to yield L-rhamnulose 1-phosphate. The protein is Rhamnulokinase of Halalkalibacterium halodurans (strain ATCC BAA-125 / DSM 18197 / FERM 7344 / JCM 9153 / C-125) (Bacillus halodurans).